Here is a 396-residue protein sequence, read N- to C-terminus: Formate-dependent phosphoribosylglycinamide formyltransferase (396 aa).

N(1)-(5-phospho-beta-D-ribosyl)glycinamide contacts are provided by residues 24–25 and glutamate 84; that span reads EL. Residues arginine 116, lysine 157, 162-167, 197-200, and glutamate 205 each bind ATP; these read SSGKGQ and EGFV. An ATP-grasp domain is found at 121–310; the sequence is RLAAETLGIK…EFALHVRAIL (190 aa). Residues glutamate 269 and glutamate 281 each coordinate Mg(2+). Residues aspartate 288, lysine 359, and 366 to 367 contribute to the N(1)-(5-phospho-beta-D-ribosyl)glycinamide site; that span reads RR.

The protein belongs to the PurK/PurT family. As to quaternary structure, homodimer.

It catalyses the reaction N(1)-(5-phospho-beta-D-ribosyl)glycinamide + formate + ATP = N(2)-formyl-N(1)-(5-phospho-beta-D-ribosyl)glycinamide + ADP + phosphate + H(+). It functions in the pathway purine metabolism; IMP biosynthesis via de novo pathway; N(2)-formyl-N(1)-(5-phospho-D-ribosyl)glycinamide from N(1)-(5-phospho-D-ribosyl)glycinamide (formate route): step 1/1. Involved in the de novo purine biosynthesis. Catalyzes the transfer of formate to 5-phospho-ribosyl-glycinamide (GAR), producing 5-phospho-ribosyl-N-formylglycinamide (FGAR). Formate is provided by PurU via hydrolysis of 10-formyl-tetrahydrofolate. This is Formate-dependent phosphoribosylglycinamide formyltransferase from Psychromonas ingrahamii (strain DSM 17664 / CCUG 51855 / 37).